The primary structure comprises 192 residues: Putative acetyltransferase SH0499 (192 aa).

This sequence belongs to the transferase hexapeptide repeat family.

The sequence is that of Putative acetyltransferase SH0499 from Staphylococcus haemolyticus (strain JCSC1435).